The sequence spans 279 residues: Single-strand selective monofunctional uracil DNA glycosylase (279 aa).

Substrate contacts are provided by M86, F100, and N165. A DNA-binding region spans residues 175 to 189 (SGRNLTPAELPAKQR). H241 is a substrate binding site.

The protein belongs to the uracil-DNA glycosylase (UDG) superfamily. SMUG1 family.

It localises to the nucleus. Recognizes base lesions in the genome and initiates base excision DNA repair. Acts as a monofunctional DNA glycosylase specific for uracil (U) residues in DNA with a preference for single-stranded DNA substrates. The activity is greater toward mismatches (U/G) compared to matches (U/A). Excises uracil (U), 5-formyluracil (fU) and uracil derivatives bearing an oxidized group at C5 [5-hydroxyuracil (hoU) and 5-hydroxymethyluracil (hmU)] in ssDNA and dsDNA, but not analogous cytosine derivatives (5-hydroxycytosine and 5-formylcytosine), nor other oxidized bases. The activity is damage-specific and salt-dependent. The substrate preference is the following: ssDNA &gt; dsDNA (G pair) = dsDNA (A pair) at low salt concentration, and dsDNA (G pair) &gt; dsDNA (A pair) &gt; ssDNA at high salt concentration. This Mus musculus (Mouse) protein is Single-strand selective monofunctional uracil DNA glycosylase (Smug1).